The sequence spans 600 residues: Probable pectin methyltransferase QUA3 (600 aa).

Residues 1 to 18 (MGHVNLPASKRGNPRQWR) are Cytoplasmic-facing. Residues 19 to 39 (LLDIVTAAFFGIVLLFFILLF) traverse the membrane as a helical; Signal-anchor for type II membrane protein segment. Topologically, residues 40–600 (TPLGDSMAAS…SLWKLPSNSH (561 aa)) are lumenal. Asn283 carries N-linked (GlcNAc...) asparagine glycosylation.

It belongs to the methyltransferase superfamily. As to expression, highly expressed and abundant in suspension-cultured cells, but low levels in seedlings.

The protein localises to the golgi apparatus membrane. It participates in glycan metabolism; pectin biosynthesis. In terms of biological role, S-adenosyl-L-methionine (SAM)-dependent methyltransferase (MTase) which mediates the methylesterification of the pectin homogalacturonan (HG) and thus regulates cell wall biosynthesis, at least in suspension-cultured cells. In Arabidopsis thaliana (Mouse-ear cress), this protein is Probable pectin methyltransferase QUA3.